The following is a 217-amino-acid chain: MNSIRQIERLNEQELDKPFSSSWHQDYSDSAYIYIGNLDFDLNEDDILCVFSEFGEPVDINLVRDKETGKSKGFAFLKYEDQRSTVLAVDNMTNVKLLDRLVRVDHVASYKVPQKEKEPANLVPLGESGSSLSVSTINTSNLPDHDYKTIIQNEVEQTLSPKDEKDLLDPMRDYIHREKRRKLKHESSDRSDKSDSNRHSRHHRRHSRSRRHRDLDG.

Residues 31–109 form the RRM domain; it reads AYIYIGNLDF…RLVRVDHVAS (79 aa). Disordered stretches follow at residues 119-138 and 154-217; these read PANLVPLGESGSSLSVSTIN and EVEQ…DLDG. Polar residues predominate over residues 128 to 138; that stretch reads SGSSLSVSTIN. Ser160 bears the Phosphoserine mark. Composition is skewed to basic and acidic residues over residues 161–176 and 185–198; these read PKDEKDLLDPMRDYIH and HESSDRSDKSDSNR. Residues 199 to 217 are compositionally biased toward basic residues; it reads HSRHHRRHSRSRRHRDLDG.

It belongs to the IST3 family. In terms of assembly, belongs to the 40S cdc5-associated complex (or cwf complex), a spliceosome sub-complex reminiscent of a late-stage spliceosome composed of the U2, U5 and U6 snRNAs and at least brr2, cdc5, cwf2/prp3, cwf3/syf1, cwf4/syf3, cwf5/ecm2, spp42/cwf6, cwf7/spf27, cwf8, cwf9, cwf10, cwf11, cwf12, prp45/cwf13, cwf14, cwf15, cwf16, cwf17, cwf18, cwf19, cwf20, cwf21, cwf22, cwf23, cwf24, cwf25, cwf26, cyp7/cwf27, cwf28, cwf29/ist3, lea1, msl1, prp5/cwf1, prp10, prp12/sap130, prp17, prp22, sap61, sap62, sap114, sap145, slu7, smb1, smd1, smd3, smf1, smg1 and syf2.

The protein localises to the nucleus. Functionally, required for pre-mRNA splicing and spliceosome assembly. The sequence is that of U2 snRNP component ist3 (cwf29) from Schizosaccharomyces pombe (strain 972 / ATCC 24843) (Fission yeast).